A 355-amino-acid polypeptide reads, in one-letter code: MKASSGKPREFRPAVLLLILGLLLRDSRGSSIQGFLADVEVHGSSRLTRTHTLRYNVRAHSLEGSEKTQLLVLIYVDEELFLKYNGDSRETEPLGCWIKGHGGNETCARETNNLLKVEEKLRGMMAEVINQKSQEEGLHTLQATLGCELLSNGSTRGFWHLGYDGQNFLTFDQKTLTWTVDGPSTQQNKMFWKTHAPRADLVKTFLDDICPAHLQRYLASLRNGLQDTGPPMVTVTCRNYPVGRVTLTCRAFNLYTREATLVWLQDGKPVQQKTFRSETILPSGDGTYQARVSIRVLPGQEPQFSCNLRHGNHSIMQTAVSGHAAEDSQDVASSATASAGSALPVVLAVALARAN.

An N-terminal signal peptide occupies residues M1–G29. Residues R46–G137 form an alpha-1 region. 3 disulfide bridges follow: C96–C107, C147–C210, and C249–C306. N-linked (GlcNAc...) asparagine glycosylation is found at N104 and N152. The tract at residues L138–G229 is alpha-2. The segment at P230–H323 is alpha-3. One can recognise an Ig-like C1-type domain in the interval P231 to S321. N312 carries an N-linked (GlcNAc...) asparagine glycan. The connecting peptide stretch occupies residues A324 to Q329. D330 is lipidated: GPI-anchor amidated aspartate. The propeptide at V331–N355 is removed in mature form.

The protein belongs to the MHC class I family. In terms of assembly, heterodimer with B2M (beta-2-microglobulin). In terms of processing, N-glycosylated. As to expression, ubiquitously expressed in neonatal and adult tissues.

Its subcellular location is the cell membrane. Its function is as follows. Binds to heparan sulfate proteoglycans on the surface of fibroblast (NIH-3T3) cells. This chain is MHC class I-like protein MILL2, found in Mus musculus (Mouse).